The primary structure comprises 527 residues: Peptide chain release factor 3 (527 aa).

The 269-residue stretch at 9-277 (AKRRTFAIIS…AVVDWAPRPL (269 aa)) folds into the tr-type G domain. Residues 18 to 25 (SHPDAGKT), 86 to 90 (DTPGH), and 140 to 143 (NKLD) contribute to the GTP site.

It belongs to the TRAFAC class translation factor GTPase superfamily. Classic translation factor GTPase family. PrfC subfamily.

Its subcellular location is the cytoplasm. Increases the formation of ribosomal termination complexes and stimulates activities of RF-1 and RF-2. It binds guanine nucleotides and has strong preference for UGA stop codons. It may interact directly with the ribosome. The stimulation of RF-1 and RF-2 is significantly reduced by GTP and GDP, but not by GMP. In Pseudomonas fluorescens (strain SBW25), this protein is Peptide chain release factor 3.